The following is a 601-amino-acid chain: Elongation factor 4 (601 aa).

The region spanning 5–187 is the tr-type G domain; sequence SNIRNFAIIA…AIVTKLPSPN (183 aa). GTP is bound by residues 17-22 and 134-137; these read DHGKST and NKID.

It belongs to the TRAFAC class translation factor GTPase superfamily. Classic translation factor GTPase family. LepA subfamily.

It is found in the cell inner membrane. The enzyme catalyses GTP + H2O = GDP + phosphate + H(+). Required for accurate and efficient protein synthesis under certain stress conditions. May act as a fidelity factor of the translation reaction, by catalyzing a one-codon backward translocation of tRNAs on improperly translocated ribosomes. Back-translocation proceeds from a post-translocation (POST) complex to a pre-translocation (PRE) complex, thus giving elongation factor G a second chance to translocate the tRNAs correctly. Binds to ribosomes in a GTP-dependent manner. This chain is Elongation factor 4, found in Orientia tsutsugamushi (strain Ikeda) (Rickettsia tsutsugamushi).